The primary structure comprises 273 residues: Inactive endochitinase At2g43600 (273 aa).

Positions 1-22 (MTIKNVIFSLFILAILAETVFS) are cleaved as a signal peptide. Residues 23–61 (QNCMDTSCPGLKECCSRWGFCGTKDEYCGFFCFSGPCNI) enclose the Chitin-binding type-1 domain. 4 cysteine pairs are disulfide-bonded: Cys25/Cys37, Cys30/Cys43, Cys36/Cys50, and Cys54/Cys59. Positions 78-273 (GKIETVITSA…GVTPDQGLDC (196 aa)) are catalytic. A glycan (N-linked (GlcNAc...) asparagine) is linked at Asn99.

This sequence belongs to the glycosyl hydrolase 19 family. Chitinase class I subfamily.

The polypeptide is Inactive endochitinase At2g43600 (Arabidopsis thaliana (Mouse-ear cress)).